The chain runs to 809 residues: AP-3 complex subunit beta (809 aa).

HEAT repeat units follow at residues 37-76 (YYSQ…DDDS), 112-151 (DPNL…SSLA), 153-186 (IILH…AGKN), 187-224 (DYHE…DHLE), and 524-561 (KICP…YDID). Phosphoserine occurs at positions 693, 698, 724, and 726. Disordered regions lie at residues 708–739 (FTSS…FTSQ) and 763–809 (PRKI…HLEL). Over residues 722–739 (GDSNSISGKGNVNTFTSQ) the composition is skewed to polar residues. The span at 772–791 (ESSDEDEDESEESSDDDEYS) shows a compositional bias: acidic residues. Low complexity predominate over residues 792–809 (DSSLGTSSSGTSSSHLEL).

Belongs to the adaptor complexes large subunit family. Adaptor protein complex 3 (AP-3) is a heterotetramer composed of 2 large adaptins (APL5 and APL6), a medium adaptin (APM3) and a small adaptin (APS3). Post-translationally, pyrophosphorylated by 5-diphosphoinositol pentakisphosphate (5-IP7). Serine pyrophosphorylation is achieved by Mg(2+)-dependent, but enzyme independent transfer of a beta-phosphate from a inositol pyrophosphate to a pre-phosphorylated serine residue.

It localises to the golgi apparatus. It is found in the cytoplasmic vesicle. The protein localises to the clathrin-coated vesicle membrane. In terms of biological role, part of the AP-3 complex, an adaptor-related complex which is not clathrin-associated. The complex is associated with the Golgi region as well as more peripheral structures. It facilitates the budding of vesicles from the Golgi membrane and may be directly involved in trafficking to the vacuole. Required for the transport via the ALP pathway, which directs the transport of the cargo proteins PHO8 and VAM3 to the vacuole. The protein is AP-3 complex subunit beta (APL6) of Saccharomyces cerevisiae (strain ATCC 204508 / S288c) (Baker's yeast).